Here is a 579-residue protein sequence, read N- to C-terminus: Plastidial pyruvate kinase 2 (579 aa).

The N-terminal 63 residues, 1–63 (MAQVVATRSI…SRRVVDTTVR (63 aa)), are a transit peptide targeting the chloroplast. Over residues 6-24 (ATRSIQGSMLSPNGGSVST) the composition is skewed to polar residues. Residues 6 to 26 (ATRSIQGSMLSPNGGSVSTRS) form a disordered region. A substrate-binding site is contributed by arginine 140. K(+)-binding residues include asparagine 142, serine 144, aspartate 175, and threonine 176. 142-145 (NMSH) is a binding site for ATP. Position 182 (arginine 182) interacts with ATP. A substrate-binding site is contributed by lysine 325. Glutamate 327 contacts Mg(2+). Substrate-binding residues include glycine 350, aspartate 351, and threonine 383. Aspartate 351 contributes to the Mg(2+) binding site.

This sequence belongs to the pyruvate kinase family. Oligomer of alpha and beta subunits. Mg(2+) is required as a cofactor. Requires K(+) as cofactor. As to expression, mostly expressed in seeds, and, to a lower extent, in roots, leaves (veins and trichomes), inflorescences, siliques, pollen (grains and tubes) and flowers (sepals and petals).

The protein localises to the plastid. The protein resides in the chloroplast stroma. It is found in the mitochondrion. The enzyme catalyses pyruvate + ATP = phosphoenolpyruvate + ADP + H(+). It participates in carbohydrate degradation; glycolysis; pyruvate from D-glyceraldehyde 3-phosphate: step 5/5. In terms of biological role, required for plastidial pyruvate kinase activity. Involved in seed oil accumulation, embryo development and seed storage compounds mobilization upon germination. This chain is Plastidial pyruvate kinase 2 (PKP2), found in Arabidopsis thaliana (Mouse-ear cress).